Reading from the N-terminus, the 229-residue chain is PKHD-type hydroxylase Nham_1514 (229 aa).

The region spanning Gln-78–Ser-180 is the Fe2OG dioxygenase domain. 3 residues coordinate Fe cation: His-98, Asp-100, and His-161. Arg-171 provides a ligand contact to 2-oxoglutarate.

Requires Fe(2+) as cofactor. L-ascorbate is required as a cofactor.

In Nitrobacter hamburgensis (strain DSM 10229 / NCIMB 13809 / X14), this protein is PKHD-type hydroxylase Nham_1514.